Reading from the N-terminus, the 827-residue chain is Spastin (827 aa).

The segment covering 1 to 13 (MVRNKYTLTTAGK) has biased composition (polar residues). The tract at residues 1-58 (MVRNKYTLTTAGKSPSKKSRTGSLSKQHDATGDDDGETGTLDGSGSAAGSPVGGGTDA) is disordered. Topologically, residues 1–79 (MVRNKYTLTT…KQNLYIISFP (79 aa)) are cytoplasmic. Positions 38–50 (TGTLDGSGSAAGS) are enriched in low complexity. Residues 80 to 100 (VIFVFNVLRSLLYQLFIVFRY) constitute an intramembrane region (helical). At 101-827 (VYNFTTKVVY…WLQDFGDVTL (727 aa)) the chain is on the cytoplasmic side. 2 disordered regions span residues 127 to 190 (QHGH…AHPL) and 207 to 229 (SIQR…KQKH). Basic residues predominate over residues 129-141 (GHHHHHHHRHSSH). Low complexity predominate over residues 142–190 (SIHSTAAAHQLQQHQQQQQHQYSLLQQEQHGVTEPQQQQQQQHQAAHPL). The 76-residue stretch at 231–306 (HRRAFEYISK…SMARDRLQFL (76 aa)) folds into the MIT domain. 3 disordered regions span residues 358–381 (HHPA…ATPS), 398–433 (VGYK…GGAG), and 476–526 (VSIP…PQIS). A compositionally biased stretch (low complexity) spans 364–381 (TAASSRPTTAATAPATPS). Low complexity-rich tracts occupy residues 476–486 (VSIPIPGSSPV) and 510–524 (QQPQ…QQPQ). 592-599 (GPPGNGKT) contributes to the ATP binding site.

The protein belongs to the AAA ATPase family. Spastin subfamily. Homohexamer. The homohexamer is stabilized by ATP-binding. The homohexamer may adopt a ring conformation through which microtubules pass prior to being severed. Interacts with microtubules.

The protein localises to the membrane. The protein resides in the cytoplasm. Its subcellular location is the cytoskeleton. It is found in the microtubule organizing center. It localises to the centrosome. It carries out the reaction n ATP + n H2O + a microtubule = n ADP + n phosphate + (n+1) alpha/beta tubulin heterodimers.. In terms of biological role, ATP-dependent microtubule severing protein. Microtubule severing may promote reorganization of cellular microtubule arrays and the release of microtubules from the microtubule organizing center following nucleation. In Anopheles gambiae (African malaria mosquito), this protein is Spastin (spas).